The chain runs to 67 residues: Large ribosomal subunit protein uL29 (67 aa).

Belongs to the universal ribosomal protein uL29 family.

The polypeptide is Large ribosomal subunit protein uL29 (Ehrlichia ruminantium (strain Gardel)).